The following is a 425-amino-acid chain: Ribosome biogenesis protein WDR12 homolog (425 aa).

A ubiquitin-like (UBL) domain region spans residues 7-93 (IQAKFFTKDE…ETIVHLEYLE (87 aa)). 7 WD repeats span residues 105 to 142 (IHDD…RRLT), 145 to 187 (GHLG…NAVE), 194 to 233 (GHAR…TDTD), 265 to 303 (GHHE…MKSQ), 305 to 344 (AGSK…GTIV), 350 to 390 (SHAG…APLY), and 394 to 425 (GHED…FEHK). The disordered stretch occupies residues 227–253 (PDSTDTDHGQDGSEEGSRKKQKTVDGK). Residues 231–253 (DTDHGQDGSEEGSRKKQKTVDGK) are compositionally biased toward basic and acidic residues.

The protein belongs to the WD repeat WDR12/YTM1 family.

It localises to the nucleus. It is found in the nucleolus. The protein localises to the nucleoplasm. In terms of biological role, required for maturation of ribosomal RNAs and formation of the large ribosomal subunit. This chain is Ribosome biogenesis protein WDR12 homolog, found in Ixodes scapularis (Black-legged tick).